Here is a 608-residue protein sequence, read N- to C-terminus: 1-phosphatidylinositol 4,5-bisphosphate phosphodiesterase zeta-1 (608 aa).

The 36-residue stretch at Cys-35 to Arg-70 folds into the EF-hand domain. A PI-PLC X-box domain is found at Gln-155–Lys-299. Catalysis depends on residues His-170 and His-215. A disordered region spans residues Lys-305–Thr-324. Positions Leu-349 to Arg-465 constitute a PI-PLC Y-box domain. Residues Arg-465–Ser-589 form the C2 domain.

In terms of assembly, interacts via its C2 domain with PtdIns(3)P and, to a lesser extent, PtdIns(5)P in vitro. It depends on Ca(2+) as a cofactor. In terms of tissue distribution, expressed specifically in testis and sperm. Weakly expressed in pancreatic-duct cells. Up-regulated in pancreatic-duct cells from patients with cystic fibrosis.

The protein localises to the nucleus. It localises to the cytoplasm. Its subcellular location is the perinuclear region. The catalysed reaction is a 1,2-diacyl-sn-glycero-3-phospho-(1D-myo-inositol-4,5-bisphosphate) + H2O = 1D-myo-inositol 1,4,5-trisphosphate + a 1,2-diacyl-sn-glycerol + H(+). Functionally, the production of the second messenger molecules diacylglycerol (DAG) and inositol 1,4,5-trisphosphate (IP3) is mediated by activated phosphatidylinositol-specific phospholipase C enzymes. In vitro, hydrolyzes PtdIns(4,5)P2 in a Ca(2+)-dependent manner. Triggers intracellular Ca(2+) oscillations in oocytes solely during M phase and is involved in inducing oocyte activation and initiating embryonic development up to the blastocyst stage. Is therefore a strong candidate for the egg-activating soluble sperm factor that is transferred from the sperm into the egg cytoplasm following gamete membrane fusion. May exert an inhibitory effect on phospholipase-C-coupled processes that depend on calcium ions and protein kinase C, including CFTR trafficking and function. This chain is 1-phosphatidylinositol 4,5-bisphosphate phosphodiesterase zeta-1, found in Homo sapiens (Human).